Consider the following 387-residue polypeptide: Queuine tRNA-ribosyltransferase (387 aa).

Catalysis depends on D93, which acts as the Proton acceptor. Residues 93-97 (DSGGF), D147, Q190, and G217 contribute to the substrate site. The interval 248-254 (GVGTPDD) is RNA binding. D267 acts as the Nucleophile in catalysis. Positions 272–276 (TRAGR) are RNA binding; important for wobble base 34 recognition. Residues C305, C307, C310, and H336 each contribute to the Zn(2+) site.

This sequence belongs to the queuine tRNA-ribosyltransferase family. Homodimer. Within each dimer, one monomer is responsible for RNA recognition and catalysis, while the other monomer binds to the replacement base PreQ1. Zn(2+) is required as a cofactor.

The catalysed reaction is 7-aminomethyl-7-carbaguanine + guanosine(34) in tRNA = 7-aminomethyl-7-carbaguanosine(34) in tRNA + guanine. It functions in the pathway tRNA modification; tRNA-queuosine biosynthesis. In terms of biological role, catalyzes the base-exchange of a guanine (G) residue with the queuine precursor 7-aminomethyl-7-deazaguanine (PreQ1) at position 34 (anticodon wobble position) in tRNAs with GU(N) anticodons (tRNA-Asp, -Asn, -His and -Tyr). Catalysis occurs through a double-displacement mechanism. The nucleophile active site attacks the C1' of nucleotide 34 to detach the guanine base from the RNA, forming a covalent enzyme-RNA intermediate. The proton acceptor active site deprotonates the incoming PreQ1, allowing a nucleophilic attack on the C1' of the ribose to form the product. After dissociation, two additional enzymatic reactions on the tRNA convert PreQ1 to queuine (Q), resulting in the hypermodified nucleoside queuosine (7-(((4,5-cis-dihydroxy-2-cyclopenten-1-yl)amino)methyl)-7-deazaguanosine). The polypeptide is Queuine tRNA-ribosyltransferase (Gluconacetobacter diazotrophicus (strain ATCC 49037 / DSM 5601 / CCUG 37298 / CIP 103539 / LMG 7603 / PAl5)).